We begin with the raw amino-acid sequence, 167 residues long: Leptin (167 aa).

The first 21 residues, 1 to 21 (MRCGPLCRFLWLWPYLSYIEA), serve as a signal peptide directing secretion. An intrachain disulfide couples C117 to C167.

The protein belongs to the leptin family.

The protein resides in the secreted. In terms of biological role, key player in the regulation of energy balance and body weight control. Once released into the circulation, has central and peripheral effects by binding LEPR, found in many tissues, which results in the activation of several major signaling pathways. In the hypothalamus, acts as an appetite-regulating factor that induces a decrease in food intake and an increase in energy consumption by inducing anorexinogenic factors and suppressing orexigenic neuropeptides, also regulates bone mass and secretion of hypothalamo-pituitary-adrenal hormones. In the periphery, increases basal metabolism, influences reproductive function, regulates pancreatic beta-cell function and insulin secretion, is pro-angiogenic for endothelial cell and affects innate and adaptive immunity. In the arcuate nucleus of the hypothalamus, activates by depolarization POMC neurons inducing FOS and SOCS3 expression to release anorexigenic peptides and inhibits by hyperpolarization NPY neurons inducing SOCS3 with a consequent reduction on release of orexigenic peptides. In addition to its known satiety inducing effect, has a modulatory role in nutrient absorption. In the intestine, reduces glucose absorption by enterocytes by activating PKC and leading to a sequential activation of p38, PI3K and ERK signaling pathways which exerts an inhibitory effect on glucose absorption. Acts as a growth factor on certain tissues, through the activation of different signaling pathways increases expression of genes involved in cell cycle regulation such as CCND1, via JAK2-STAT3 pathway, or VEGFA, via MAPK1/3 and PI3K-AKT1 pathways. May also play an apoptotic role via JAK2-STAT3 pathway and up-regulation of BIRC5 expression. Pro-angiogenic, has mitogenic activity on vascular endothelial cells and plays a role in matrix remodeling by regulating the expression of matrix metalloproteinases (MMPs) and tissue inhibitors of metalloproteinases (TIMPs). In innate immunity, modulates the activity and function of neutrophils by increasing chemotaxis and the secretion of oxygen radicals. Increases phagocytosis by macrophages and enhances secretion of pro-inflammatory mediators. Increases cytotoxic ability of NK cells. Plays a pro-inflammatory role, in synergy with IL1B, by inducing NOS2 which promotes the production of IL6, IL8 and Prostaglandin E2, through a signaling pathway that involves JAK2, PI3K, MAP2K1/MEK1 and MAPK14/p38. In adaptive immunity, promotes the switch of memory T-cells towards T helper-1 cell immune responses. Increases CD4(+)CD25(-) T-cell proliferation and reduces autophagy during TCR (T-cell receptor) stimulation, through MTOR signaling pathway activation and BCL2 up-regulation. The sequence is that of Leptin (LEP) from Ursus thibetanus (Asiatic black bear).